A 611-amino-acid polypeptide reads, in one-letter code: MYSISNKKPSILSMVPLNILKNQDLKVKKDQEKKISFNPVVTPIRPDDYHEKTSRSSSSSHSDSPEFLRINNNKSGHKNGKLKSFESKKLVPLFIGDLHETVTEETLKGIFKKYPSFVSAKVCLDSVTKKSLGHGYLNFEDKEEAEKAMEELNYTKVNGKEIRIMPSLRNTTFRKNFGTNVFFSNLPLNNPLLTTRVFYDTFSRYGKILSCKLDSRKDIGFVYFEDEKTARNVIKMYNNTSFFGKKILCGIHFDKEVRSVPNFETQKSRLDAETIIEKEQSLNEKHSKGNDKESKNIYSSSQNSIFIKNLPTITTRDDILNFFSEVGPIKSIYLSNATKVKYLWAFVTYKNSSDSEKAIKRYNNFYFRGKKLLVTRAQDKEERAKFIESQKISTLFLENLSAVCNKEFLKYLCHQENIRPFKIQIDGYDENSSTYSGFIKFRNFEDATRIFNFLNNRLVGGSIVTTSWERQNNAPKYHDGYGMRNIHTSSHPQITPYYQYSHANSLNSPHMRDLSSMNSSTRSLIKNKNFNKKVLETFEKQVRRGIDFMRFPSATRDENVHGIAEYIFDTYWNRDVLILDKFLSLLNSSPYHEGVLQKQIEEAASSLGFKR.

Residues 37–81 form a disordered region; sequence FNPVVTPIRPDDYHEKTSRSSSSSHSDSPEFLRINNNKSGHKNGK. The segment covering 45–54 has biased composition (basic and acidic residues); sequence RPDDYHEKTS. RRM domains lie at 91–169, 179–247, 303–379, and 393–471; these read VPLF…PSLR, TNVF…GKKI, NSIF…RAQD, and STLF…WERQ.

It is found in the nucleus. The chain is Protein PES4 (PES4) from Saccharomyces cerevisiae (strain ATCC 204508 / S288c) (Baker's yeast).